Reading from the N-terminus, the 155-residue chain is Xanthine-guanine phosphoribosyltransferase (155 aa).

Residues 37–38 (RG), Arg-69, and 90–98 (DDLVDTGGT) contribute to the 5-phospho-alpha-D-ribose 1-diphosphate site. Residue Arg-69 coordinates GMP. Asp-91 is a binding site for Mg(2+). Asp-94 and Ile-137 together coordinate guanine. The xanthine site is built by Asp-94 and Ile-137. Residues 94–98 (DTGGT) and 136–137 (WI) contribute to the GMP site.

The protein belongs to the purine/pyrimidine phosphoribosyltransferase family. XGPT subfamily. As to quaternary structure, homotetramer. Mg(2+) serves as cofactor.

Its subcellular location is the cell inner membrane. The catalysed reaction is GMP + diphosphate = guanine + 5-phospho-alpha-D-ribose 1-diphosphate. It catalyses the reaction XMP + diphosphate = xanthine + 5-phospho-alpha-D-ribose 1-diphosphate. The enzyme catalyses IMP + diphosphate = hypoxanthine + 5-phospho-alpha-D-ribose 1-diphosphate. It functions in the pathway purine metabolism; GMP biosynthesis via salvage pathway; GMP from guanine: step 1/1. It participates in purine metabolism; XMP biosynthesis via salvage pathway; XMP from xanthine: step 1/1. Its function is as follows. Purine salvage pathway enzyme that catalyzes the transfer of the ribosyl-5-phosphate group from 5-phospho-alpha-D-ribose 1-diphosphate (PRPP) to the N9 position of the 6-oxopurines guanine and xanthine to form the corresponding ribonucleotides GMP (guanosine 5'-monophosphate) and XMP (xanthosine 5'-monophosphate), with the release of PPi. To a lesser extent, also acts on hypoxanthine. The chain is Xanthine-guanine phosphoribosyltransferase from Aeromonas salmonicida (strain A449).